The following is a 310-amino-acid chain: Tyrosine recombinase XerC (310 aa).

One can recognise a Core-binding (CB) domain in the interval 22 to 103; it reads SQMLEAIEDF…SVKSFSTWAV (82 aa). The Tyr recombinase domain occupies 124–304; it reads NLPRVLGEVQ…SSQRLLEAFR (181 aa). Catalysis depends on residues R165, K189, H256, R259, and H282. The active-site O-(3'-phospho-DNA)-tyrosine intermediate is Y291.

This sequence belongs to the 'phage' integrase family. XerC subfamily. In terms of assembly, forms a cyclic heterotetrameric complex composed of two molecules of XerC and two molecules of XerD.

Its subcellular location is the cytoplasm. Its function is as follows. Site-specific tyrosine recombinase, which acts by catalyzing the cutting and rejoining of the recombining DNA molecules. The XerC-XerD complex is essential to convert dimers of the bacterial chromosome into monomers to permit their segregation at cell division. It also contributes to the segregational stability of plasmids. The protein is Tyrosine recombinase XerC of Corynebacterium efficiens (strain DSM 44549 / YS-314 / AJ 12310 / JCM 11189 / NBRC 100395).